Here is a 935-residue protein sequence, read N- to C-terminus: Potassium channel AKT1 (935 aa).

Over 1 to 106 (MARWGAARMA…YDRRYRIWET (106 aa)) the chain is Cytoplasmic. Residues 107–127 (FLIVLVVYSAWVSPFEFGFIP) traverse the membrane as a helical segment. At 128 to 136 (KPTGALATA) the chain is on the extracellular side. A helical transmembrane segment spans residues 137-157 (DNVVNAFFAVDIILTFFVAYL). Residues 158–178 (DKMSYMLEDDPKKIAWRYSTT) are Cytoplasmic-facing. Residues 179–199 (WLVLDVASTIPSEFARRILPS) traverse the membrane as a helical segment. Residues 200 to 205 (KLRSYG) lie on the Extracellular side of the membrane. A helical; Voltage-sensor transmembrane segment spans residues 206-226 (FFNMLRLWRLRRVSSLFSRLE). Residues 227-240 (KDRHFNYFWVRCAK) are Cytoplasmic-facing. A helical transmembrane segment spans residues 241-261 (LICVTLFAVHCAACFYYLLAD). Over 262–288 (RYPVPTSTWIGNYMADFHERSLWIRYV) the chain is Extracellular. Residues 289-308 (TSVYWSITTLTTVGYGDLHA) constitute an intramembrane region (pore-forming). Over 309-312 (ENTR) the chain is Extracellular. A helical membrane pass occupies residues 313 to 333 (EMIFNIFYMLFNLGLTAYLIG). The Cytoplasmic portion of the chain corresponds to 334-935 (NMTNLVVHGT…WDAEKMKGKS (602 aa)). 419–538 (LFQGVSNDLI…TIIMNNLIQF (120 aa)) contacts a nucleoside 3',5'-cyclic phosphate. 6 ANK repeats span residues 565–594 (DLPI…DPNE), 598–627 (DGHT…DPNA), 631–660 (EGKV…DLSS), 662–691 (DTGL…DVNR), 695–724 (DGTT…DIDK), and 728–757 (NGWT…ATAS). The segment at 826 to 854 (SQAQRETDHPLSRGGLAATGSPNPSSGSR) is disordered. Residues 845–854 (GSPNPSSGSR) are compositionally biased toward polar residues. One can recognise a KHA domain in the interval 859 to 935 (RVTISCPEKG…WDAEKMKGKS (77 aa)).

Belongs to the potassium channel family. Plant (TC 1.A.1.4) subfamily. The potassium channel is probably a homo- or heterotetrameric complex of pore-forming subunits. Highly expressed in the epidermis and endodermis of roots, and at lower level in cells of the vasculature and the cortex. Expressed in xylem parenchyma, phloem and mesophyll cells of leaves.

It is found in the membrane. In terms of biological role, highly selective inward-rectifying potassium channel that mediates potassium uptake by plant roots. The sequence is that of Potassium channel AKT1 (AKT1) from Oryza sativa subsp. indica (Rice).